The chain runs to 953 residues: Coatomer subunit beta (953 aa).

Threonine 2 carries the N-acetylthreonine modification. HEAT repeat units follow at residues 96–131 (HEMILVCDAYRKDLQHPNEFIRGSTLRFLCKLKEAE), 132–168 (LLEPLMPAIRACLEHRHSYVRRNAVLAIYTIYRNFEN), 240–276 (SERARFIRCIYNLLQSSSPAVKYEAAGTLVTLSSAPT), 277–314 (AIKAAAQCYIDLIIKESDNNVKLIVLDRLVELKEHPAH), 316–353 (RVLQDLVMDILRVLSTPDLEVRKKTLQLALDLVSSRNV), and 396–433 (DMAANVIPVLMEFLSDSNEAAAADVLEFVREAIQRFDN). An N6-acetyllysine modification is found at lysine 494.

Oligomeric complex that consists of at least the alpha, beta, beta', gamma, delta, epsilon and zeta subunits. Interacts with SCYL1. Interacts with CAPN8. Interacts with COPG1. Interacts with ARF1 (myristoylated); this interaction is required for binding of COPB1 to Golgi membranes. Interacts (via trunk domain) with ARF1 (via switch I region); the interaction is direct. Interacts with KCNK2 (via N-terminus); this interaction increases the channel-mediated whole cell currents and promotes plasma membrane expression of KCNK2. Interacts with PRKCE. Interacts with STX17. Interacts with TMEM115. Interacts with TMEM41B. In terms of processing, proteolytically cleaved between Ser-528 and Ser-529 by CAPN8.

Its subcellular location is the cytoplasm. It is found in the golgi apparatus membrane. The protein localises to the cytoplasmic vesicle. It localises to the COPI-coated vesicle membrane. The protein resides in the cell membrane. Its subcellular location is the endoplasmic reticulum-Golgi intermediate compartment. It is found in the microsome membrane. Functionally, the coatomer is a cytosolic protein complex that binds to dilysine motifs and reversibly associates with Golgi non-clathrin-coated vesicles, which further mediate biosynthetic protein transport from the ER, via the Golgi up to the trans Golgi network. Coatomer complex is required for budding from Golgi membranes, and is essential for the retrograde Golgi-to-ER transport of dilysine-tagged proteins. In mammals, the coatomer can only be recruited by membranes associated to ADP-ribosylation factors (ARFs), which are small GTP-binding proteins; the complex also influences the Golgi structural integrity, as well as the processing, activity, and endocytic recycling of LDL receptors. Involved in the Golgi disassembly and reassembly processes during cell cycle. Involved in autophagy by playing a role in early endosome function. Plays a role in organellar compartmentalization of secretory compartments including endoplasmic reticulum (ER)-Golgi intermediate compartment (ERGIC), Golgi, trans-Golgi network (TGN) and recycling endosomes, and in biosynthetic transport of CAV1. Plays a functional role in facilitating the transport of kappa-type opioid receptor mRNAs into axons and enhances translation of these proteins in the axonal compartment of dorsal root ganglion (DRG) cells. Required for limiting lipid storage in lipid droplets. Involved in lipid homeostasis by regulating the presence of perilipin family members PLIN2 and PLIN3 at the lipid droplet surface and promoting the association of adipocyte triglyceride lipase (PNPLA2) with the lipid droplet surface to mediate lipolysis. The sequence is that of Coatomer subunit beta (Copb1) from Rattus norvegicus (Rat).